Reading from the N-terminus, the 177-residue chain is PLAC8-like protein 1 (177 aa).

Belongs to the cornifelin family.

The sequence is that of PLAC8-like protein 1 (Plac8l1) from Mus musculus (Mouse).